The following is a 484-amino-acid chain: EF-hand calcium-binding domain-containing protein 14 (484 aa).

3 disordered regions span residues 1–48 (MKKR…TDEE), 227–255 (GSMENNGSNQILPSPSPPSELDNKSHSES), and 313–395 (EQRT…FTSD). Residues 37–48 (PDSDSESSTDEE) are compositionally biased toward acidic residues. 3 stretches are compositionally biased toward polar residues: residues 228–239 (SMENNGSNQILP), 315–324 (RTNVSSSTME), and 335–347 (LVTNRSDTVQAQS). 2 consecutive EF-hand domains span residues 423 to 452 (SSIKDLQDLFHKTGQDVDGMLTYQELWNSL) and 453 to 484 (GSAMPRPESLRAFDSNGDGRYSFLELRLALGI). Ca(2+) contacts are provided by Asp-466, Asn-468, Asp-470, Arg-472, and Glu-477.

This Mus musculus (Mouse) protein is EF-hand calcium-binding domain-containing protein 14 (Efcab14).